A 1178-amino-acid polypeptide reads, in one-letter code: DNA-directed RNA polymerase subunit beta' (1178 aa).

Zn(2+) contacts are provided by Cys-60, Cys-62, Cys-75, and Cys-78. Mg(2+) is bound by residues Asp-450, Asp-452, and Asp-454. Cys-795, Cys-869, Cys-876, and Cys-879 together coordinate Zn(2+).

The protein belongs to the RNA polymerase beta' chain family. The RNAP catalytic core consists of 2 alpha, 1 beta, 1 beta' and 1 omega subunit. When a sigma factor is associated with the core the holoenzyme is formed, which can initiate transcription. It depends on Mg(2+) as a cofactor. The cofactor is Zn(2+).

The enzyme catalyses RNA(n) + a ribonucleoside 5'-triphosphate = RNA(n+1) + diphosphate. In terms of biological role, DNA-dependent RNA polymerase catalyzes the transcription of DNA into RNA using the four ribonucleoside triphosphates as substrates. The chain is DNA-directed RNA polymerase subunit beta' from Clostridium botulinum (strain Langeland / NCTC 10281 / Type F).